The following is a 25-amino-acid chain: Gamma-conotoxin PiVIIA (25 aa).

Intrachain disulfides connect Cys1/Cys15, Cys8/Cys19, and Cys14/Cys24. 4-hydroxyproline is present on Pro4. 4-carboxyglutamate is present on residues Glu13 and Glu20.

Belongs to the conotoxin O2 superfamily. Expressed by the venom duct.

It localises to the secreted. Functionally, micromolar concentrations of PiVIIA increase the magnitude of the macroscopic calcium current in DRG neurons from rat. An increase, even modest of the calcium current, may have a significant impact in the excitability and electrical activity of neurons, and may set up PiVIIA as a member of the pharmacological family of the gamma-conotoxins. In Conus princeps (Prince cone), this protein is Gamma-conotoxin PiVIIA.